A 372-amino-acid polypeptide reads, in one-letter code: 3-dehydroquinate synthase (372 aa).

Residues 113–117, 137–138, Lys-150, Lys-159, and 177–180 contribute to the NAD(+) site; these read GVIGD, TS, and TLKT. Zn(2+) is bound by residues Glu-192, His-257, and His-274.

This sequence belongs to the sugar phosphate cyclases superfamily. Dehydroquinate synthase family. Co(2+) is required as a cofactor. Zn(2+) serves as cofactor. It depends on NAD(+) as a cofactor.

It localises to the cytoplasm. It catalyses the reaction 7-phospho-2-dehydro-3-deoxy-D-arabino-heptonate = 3-dehydroquinate + phosphate. It functions in the pathway metabolic intermediate biosynthesis; chorismate biosynthesis; chorismate from D-erythrose 4-phosphate and phosphoenolpyruvate: step 2/7. In terms of biological role, catalyzes the conversion of 3-deoxy-D-arabino-heptulosonate 7-phosphate (DAHP) to dehydroquinate (DHQ). In Acaryochloris marina (strain MBIC 11017), this protein is 3-dehydroquinate synthase.